The sequence spans 213 residues: Large ribosomal subunit protein uL3 (213 aa).

Residues 131-168 are disordered; sequence GPMSHGSKNHRLPGSTGAGTTPGRVYPGKRMAGRSGND.

The protein belongs to the universal ribosomal protein uL3 family. In terms of assembly, part of the 50S ribosomal subunit. Forms a cluster with proteins L14 and L19.

One of the primary rRNA binding proteins, it binds directly near the 3'-end of the 23S rRNA, where it nucleates assembly of the 50S subunit. The chain is Large ribosomal subunit protein uL3 from Synechococcus elongatus (strain ATCC 33912 / PCC 7942 / FACHB-805) (Anacystis nidulans R2).